Reading from the N-terminus, the 401-residue chain is Hemorrhagic metalloproteinase-disintegrin-like kaouthiagin (401 aa).

In terms of domain architecture, Peptidase M12B spans 14 to 208 (KYIEFYVIVD…DRPQCILNKP (195 aa)). Glu17 and Asp101 together coordinate Ca(2+). Asn112 is a glycosylation site (N-linked (GlcNAc...) asparagine). 3 disulfide bridges follow: Cys125/Cys203, Cys164/Cys187, and Cys166/Cys171. His149 provides a ligand contact to Zn(2+). Residue Glu150 is part of the active site. His153 and His159 together coordinate Zn(2+). Positions 203, 206, 218, 221, 223, 225, 228, and 231 each coordinate Ca(2+). The Disintegrin domain maps to 216-285 (PAICGNYFVE…ECPTDSLQRN (70 aa)). 11 disulfide bridges follow: Cys219-Cys248, Cys230-Cys243, Cys232-Cys238, Cys257-Cys277, Cys264-Cys296, Cys289-Cys301, Cys308-Cys358, Cys323-Cys366, Cys336-Cys346, Cys353-Cys389, and Cys383-Cys394. The D/ECD-tripeptide motif lies at 263-265 (DCD). Positions 265, 266, 268, and 280 each coordinate Ca(2+).

This sequence belongs to the venom metalloproteinase (M12B) family. P-III subfamily. P-IIIa sub-subfamily. Monomer. The cofactor is Zn(2+). In terms of tissue distribution, expressed by the venom gland.

It is found in the secreted. Its function is as follows. Snake venom zinc protease that inhibits hemostasis by binding and cleaving the vWF in humans. Also has and inhibitory effect on the collagen-induced platelet aggregation. In Naja kaouthia (Monocled cobra), this protein is Hemorrhagic metalloproteinase-disintegrin-like kaouthiagin.